We begin with the raw amino-acid sequence, 123 residues long: Probable histone H2B 3 (123 aa).

Residues 1-31 are disordered; that stretch reads MAPPKPSAKGAKKAAKTVSKPKDGKKRKHAR. The O-linked (GlcNAc) serine glycan is linked to S110. K118 participates in a covalent cross-link: Glycyl lysine isopeptide (Lys-Gly) (interchain with G-Cter in ubiquitin).

The protein belongs to the histone H2B family. In terms of assembly, the nucleosome is a histone octamer containing two molecules each of H2A, H2B, H3 and H4 assembled in one H3-H4 heterotetramer and two H2A-H2B heterodimers. The octamer wraps approximately 147 bp of DNA. Monoubiquitination of Lys-118 gives a specific tag for epigenetic transcriptional activation and is also prerequisite for histone H3 'Lys-4' and 'Lys-79' methylation. Post-translationally, glcNAcylation at Ser-110 promotes monoubiquitination of Lys-118. It fluctuates in response to extracellular glucose, and associates with transcribed genes.

It localises to the nucleus. The protein resides in the chromosome. Core component of nucleosome. Nucleosomes wrap and compact DNA into chromatin, limiting DNA accessibility to the cellular machineries which require DNA as a template. Histones thereby play a central role in transcription regulation, DNA repair, DNA replication and chromosomal stability. DNA accessibility is regulated via a complex set of post-translational modifications of histones, also called histone code, and nucleosome remodeling. The chain is Probable histone H2B 3 (his-41) from Caenorhabditis elegans.